Reading from the N-terminus, the 605-residue chain is Apoptosis-inducing factor 3 (605 aa).

Residues 18 to 29 (VLPEKERGKEEL) show a composition bias toward basic and acidic residues. The interval 18-44 (VLPEKERGKEELSASGKGSPRGYQGNG) is disordered. The region spanning 70–165 (ATVCHVKDLE…VKIEKEKVTI (96 aa)) is the Rieske domain. Residues Cys109, His111, Cys128, and His131 each contribute to the [2Fe-2S] cluster site. Residues 201-205 (GAGAA), Arg235, Lys240, Val270, Asp467, and Trp514 each bind FAD.

It belongs to the FAD-dependent oxidoreductase family.

It localises to the mitochondrion. In terms of biological role, induces apoptosis through a caspase dependent pathway. Reduces mitochondrial membrane potential. This chain is Apoptosis-inducing factor 3 (Aifm3), found in Mus musculus (Mouse).